We begin with the raw amino-acid sequence, 128 residues long: 3-aminoacrylate deaminase RutC (128 aa).

It belongs to the RutC family.

The catalysed reaction is (Z)-3-aminoacrylate + H2O + H(+) = 3-oxopropanoate + NH4(+). Involved in pyrimidine catabolism. Catalyzes the deamination of 3-aminoacrylate to malonic semialdehyde, a reaction that can also occur spontaneously. RutC may facilitate the reaction and modulate the metabolic fitness, rather than catalyzing essential functions. The sequence is that of 3-aminoacrylate deaminase RutC from Azorhizobium caulinodans (strain ATCC 43989 / DSM 5975 / JCM 20966 / LMG 6465 / NBRC 14845 / NCIMB 13405 / ORS 571).